Here is a 264-residue protein sequence, read N- to C-terminus: UPF0162 protein PM0557 (264 aa).

It belongs to the UPF0162 family.

The chain is UPF0162 protein PM0557 from Pasteurella multocida (strain Pm70).